The following is a 345-amino-acid chain: Telomere-binding protein cav (345 aa).

The tract at residues 115–337 is required for binding to Su(var)205; the sequence is RRKMVQPYPE…TITFQNTESE (223 aa). Disordered stretches follow at residues 145-180 and 200-231; these read RLDR…HEDQ and PPGV…INRP. Short sequence motifs (su(var)205-binding Pro-containing repeat) lie at residues 231–237 and 298–304; these read PETEINE and PETEMNE.

As to quaternary structure, component of the HipHop-HOAP telomere capping complex, composed of at least HipHop and cav/HOAP, and may include Su(var)205/HP1; HipHop and cav/HOAP, but not Su(var)205, are interdependent for their protein stability. Interacts with HipHop (via N-terminus). Interacts (via C-terminus) with Su(var)205/HP1 dimer (via hinge and chromoshadow domain) and Orc1; possibly interacts with other components of the origin recognition complex (ORC). Each molecule of cav/HOAP interacts with 2 molecules of Su(var)205/HP1. The HipHop-HOAP complex recruits the MTV complex, consisting of moi/modigliani, tea and ver/verrocchio, to telomeres, forming the terminin telomere-capping complex. Interacts with moi/modigliani; the interaction is direct. Interacts with ver/verrochio; the interaction is direct. Interacts with HP6, which is also part of the terminin complex. Interacts (via N-terminus) with peo/pendolino (via N-terminus); the interaction is direct.

It localises to the nucleus. Its subcellular location is the chromosome. It is found in the telomere. Part of the HipHop-HOAP complex that recruits the MTV complex to form the terminin telomere-capping complex, which binds to chromosome ends in a sequence-independent manner and prevents telomere fusion. Telomere capping is independent of the origin recognition complex (ORC). In Drosophila melanogaster (Fruit fly), this protein is Telomere-binding protein cav.